The chain runs to 80 residues: Large ribosomal subunit protein uL30 (80 aa).

The protein belongs to the universal ribosomal protein uL30 family. Part of the 50S ribosomal subunit.

In Vesicomyosocius okutanii subsp. Calyptogena okutanii (strain HA), this protein is Large ribosomal subunit protein uL30.